A 152-amino-acid polypeptide reads, in one-letter code: Deoxyuridine 5'-triphosphate nucleotidohydrolase (152 aa).

Substrate contacts are provided by residues 71-73 (RSG), asparagine 84, 88-90 (LID), and methionine 98.

This sequence belongs to the dUTPase family. It depends on Mg(2+) as a cofactor.

The catalysed reaction is dUTP + H2O = dUMP + diphosphate + H(+). The protein operates within pyrimidine metabolism; dUMP biosynthesis; dUMP from dCTP (dUTP route): step 2/2. Functionally, this enzyme is involved in nucleotide metabolism: it produces dUMP, the immediate precursor of thymidine nucleotides and it decreases the intracellular concentration of dUTP so that uracil cannot be incorporated into DNA. This chain is Deoxyuridine 5'-triphosphate nucleotidohydrolase, found in Klebsiella pneumoniae (strain 342).